A 101-amino-acid polypeptide reads, in one-letter code: Apolipoprotein C-II (101 aa).

Positions 1-22 (MGTRLLPALFLVLLVLGFEVQG) are cleaved as a signal peptide. Residues 23 to 38 (TQQPQQDEMPSPTFLT) form an O-glycosylated at one site region. Residues 66-74 (AVDEKLRDL) are lipid binding. The lipoprotein lipase cofactor stretch occupies residues 78 to 101 (STAAMSTYTGIFTDQVLSVLKGEE).

It belongs to the apolipoprotein C2 family. In terms of processing, proapolipoprotein C-II is synthesized as a sialic acid containing glycoprotein which is subsequently desialylated prior to its proteolytic processing. Post-translationally, proapolipoprotein C-II, the major form found in plasma undergoes proteolytic cleavage of its N-terminal hexapeptide to generate apolipoprotein C-II, which occurs as the minor form in plasma. As to expression, liver and intestine.

Its subcellular location is the secreted. Functionally, component of chylomicrons, very low-density lipoproteins (VLDL), low-density lipoproteins (LDL), and high-density lipoproteins (HDL) in plasma. Plays an important role in lipoprotein metabolism as an activator of lipoprotein lipase. Both proapolipoprotein C-II and apolipoprotein C-II can activate lipoprotein lipase. In normolipidemic individuals, it is mainly distributed in the HDL, whereas in hypertriglyceridemic individuals, predominantly found in the VLDL and LDL. This is Apolipoprotein C-II (APOC2) from Homo sapiens (Human).